The following is a 283-amino-acid chain: Bifunctional protein FolD (283 aa).

NADP(+) contacts are provided by residues 165 to 167 (GRS), S190, and V231.

Belongs to the tetrahydrofolate dehydrogenase/cyclohydrolase family. As to quaternary structure, homodimer.

The catalysed reaction is (6R)-5,10-methylene-5,6,7,8-tetrahydrofolate + NADP(+) = (6R)-5,10-methenyltetrahydrofolate + NADPH. It carries out the reaction (6R)-5,10-methenyltetrahydrofolate + H2O = (6R)-10-formyltetrahydrofolate + H(+). It participates in one-carbon metabolism; tetrahydrofolate interconversion. Catalyzes the oxidation of 5,10-methylenetetrahydrofolate to 5,10-methenyltetrahydrofolate and then the hydrolysis of 5,10-methenyltetrahydrofolate to 10-formyltetrahydrofolate. The polypeptide is Bifunctional protein FolD (Anoxybacillus flavithermus (strain DSM 21510 / WK1)).